The primary structure comprises 541 residues: MSAKKSTAQRLGRVLETVTRQSGRLPETPAYGSWLLGRVSESQRRRRVRIQVMLTALVVTANLLGIGVALLLVTIAIPEPSIVRDTPRWLTFGVVPGYVLLALALGSYALTRQTVQALRWAIEGRKPTREEERRTFLAPWRVAVGHLMFWGVGTALLTTLYGLINNAFIPRFLFAVSFCGVLVATATYLHTEFALRPFAAQALEAGPPPRRLAPGILGRTMVVWLLGSGVPVVGIALMAMFEMVLLNLTRMQFATGVLIISMVTLVFGFILMWILAWLTATPVRVVRAALRRVERGELRTNLVVFDGTELGELQRGFNAMVAGLRERERVRDLFGRHVGREVAAAAERERSKLGGEERHVAVVFIDIVGSTQLVTSRPPADVVKLLNKFFAIVVDEVDRHHGLVNKFEGDASLTIFGAPNRLPCPEDKALAAARAIADRLVNEMPECQAGIGVAAGQVIAGNVGARERFEYTVIGEPVNEAARLCELAKSRPGKLLASAQAVDAASEEERARWSLGRHVKLRGHDQPVRLAKPVGLTKPRR.

Helical transmembrane passes span 57-77 (LVVTANLLGIGVALLLVTIAI), 90-110 (LTFGVVPGYVLLALALGSYAL), 144-164 (VGHLMFWGVGTALLTTLYGLI), 167-187 (AFIPRFLFAVSFCGVLVATAT), 221-241 (MVVWLLGSGVPVVGIALMAMF), and 257-277 (VLIISMVTLVFGFILMWILAW). In terms of domain architecture, HAMP spans 278-329 (LTATPVRVVRAALRRVERGELRTNLVVFDGTELGELQRGFNAMVAGLRERER). A Guanylate cyclase domain is found at 361–485 (AVVFIDIVGS…EPVNEAARLC (125 aa)).

The protein belongs to the adenylyl cyclase class-3 family.

Its subcellular location is the cell membrane. This is an uncharacterized protein from Mycobacterium tuberculosis (strain CDC 1551 / Oshkosh).